Consider the following 409-residue polypeptide: Elongation factor Tu, chloroplastic (409 aa).

The 205-residue stretch at 10 to 214 folds into the tr-type G domain; sequence KPHVNIGTIG…NVDSYIPTPA (205 aa). The G1 stretch occupies residues 19–26; that stretch reads GHVDHGKT. GTP is bound at residue 19-26; sequence GHVDHGKT. Residue Thr26 participates in Mg(2+) binding. Residues 60-64 form a G2 region; that stretch reads GITIN. The interval 81 to 84 is G3; that stretch reads DCPG. GTP-binding positions include 81–85 and 136–139; these read DCPGH and NKED. Positions 136 to 139 are G4; the sequence is NKED. A G5 region spans residues 174 to 176; that stretch reads SAL.

It belongs to the TRAFAC class translation factor GTPase superfamily. Classic translation factor GTPase family. EF-Tu/EF-1A subfamily.

Its subcellular location is the plastid. It localises to the chloroplast. The catalysed reaction is GTP + H2O = GDP + phosphate + H(+). In terms of biological role, GTP hydrolase that promotes the GTP-dependent binding of aminoacyl-tRNA to the A-site of ribosomes during protein biosynthesis. The protein is Elongation factor Tu, chloroplastic (tufA) of Ostreococcus tauri.